Reading from the N-terminus, the 103-residue chain is Cyanovirin-N homolog (103 aa).

Belongs to the cyanovirin-N family.

Functionally, mannose-binding lectin. The sequence is that of Cyanovirin-N homolog from Tuber borchii (White truffle).